A 115-amino-acid polypeptide reads, in one-letter code: EVKLEESGGGLVQPGGSMKLSCVASGFTFSNYWMNWVRQSPEKGLEWVAEIRLKSHNYATHYAESVKGRFTISRDDSKSSVYLRMNNLRPEDTGIYYCTTGFAYWGQGTLVTVSA.

An Ig-like domain is found at 1-114 (EVKLEESGGG…WGQGTLVTVS (114 aa)). An intrachain disulfide couples Cys22 to Cys98.

The polypeptide is Ig heavy chain V-III region W3082 (Mus musculus (Mouse)).